The sequence spans 77 residues: Putative antitoxin VapB3 (77 aa).

The stretch at 10–60 forms a coiled coil; it reads RRGLKKELEELGINYAEAVRKFLEELVARERRRRALERARALREELRKKGA.

Forms a complex with putative toxin VapC3, possibly VapB(2)-VapC(2).

Antitoxin component of a type II toxin-antitoxin (TA) system. The protein is Putative antitoxin VapB3 (vAPb3) of Pyrobaculum aerophilum (strain ATCC 51768 / DSM 7523 / JCM 9630 / CIP 104966 / NBRC 100827 / IM2).